The chain runs to 215 residues: Adenylate kinase (215 aa).

10–15 is a binding site for ATP; the sequence is GAGKGT. Positions 30–59 are NMP; that stretch reads STGDMFRAAMKNETEMGKLAKSFIDKGELV. Residues Thr31, Arg36, 57 to 59, 86 to 89, and Gln93 each bind AMP; these read ELV and GYPR. The segment at 127–165 is LID; it reads GRYICRNCGATYHKIFNPTKVEGVCDVCGSHDLYQRADD. Arg128 contributes to the ATP binding site. Residues Cys131 and Cys134 each coordinate Zn(2+). Residue 137–138 participates in ATP binding; it reads TY. Residues Cys151 and Cys154 each contribute to the Zn(2+) site. The AMP site is built by Arg162 and Arg173. Residue Gln201 coordinates ATP.

Belongs to the adenylate kinase family. As to quaternary structure, monomer.

It is found in the cytoplasm. It carries out the reaction AMP + ATP = 2 ADP. Its pathway is purine metabolism; AMP biosynthesis via salvage pathway; AMP from ADP: step 1/1. Its function is as follows. Catalyzes the reversible transfer of the terminal phosphate group between ATP and AMP. Plays an important role in cellular energy homeostasis and in adenine nucleotide metabolism. The protein is Adenylate kinase of Lactococcus lactis subsp. lactis (strain IL1403) (Streptococcus lactis).